A 267-amino-acid polypeptide reads, in one-letter code: uncharacterized protein (267 aa).

Residues 30-52 (FMRIFLLFLFFVLFTFGVEGYVI) form a helical membrane-spanning segment.

It is found in the membrane. This is an uncharacterized protein from Aquifex aeolicus (strain VF5).